The primary structure comprises 664 residues: Putative membrane protein Bcell_0381 (664 aa).

A compositionally biased stretch (acidic residues) spans 588–616 (DVTQDENGEEKSEEDNKEEIVEENTEEDN). The tract at residues 588–622 (DVTQDENGEEKSEEDNKEEIVEENTEEDNKEEKTI) is disordered. The helical transmembrane segment at 636 to 656 (YQFLLAGIIMLVGGSCIYVFY) threads the bilayer.

Its subcellular location is the cell membrane. In Evansella cellulosilytica (strain ATCC 21833 / DSM 2522 / FERM P-1141 / JCM 9156 / N-4) (Bacillus cellulosilyticus), this protein is Putative membrane protein Bcell_0381.